The following is a 689-amino-acid chain: Elongation factor G (689 aa).

In terms of domain architecture, tr-type G spans 8–282 (ERTRNIGIMA…AVVDYLPAPT (275 aa)). Residues 17–24 (AHIDAGKT), 81–85 (DTPGH), and 135–138 (NKMD) contribute to the GTP site.

The protein belongs to the TRAFAC class translation factor GTPase superfamily. Classic translation factor GTPase family. EF-G/EF-2 subfamily.

The protein localises to the cytoplasm. Catalyzes the GTP-dependent ribosomal translocation step during translation elongation. During this step, the ribosome changes from the pre-translocational (PRE) to the post-translocational (POST) state as the newly formed A-site-bound peptidyl-tRNA and P-site-bound deacylated tRNA move to the P and E sites, respectively. Catalyzes the coordinated movement of the two tRNA molecules, the mRNA and conformational changes in the ribosome. The protein is Elongation factor G of Desulforudis audaxviator (strain MP104C).